The following is a 149-amino-acid chain: Protein TraJ (149 aa).

It is found in the cell membrane. Its function is as follows. This protein is essential for positively regulating the expression of transfer genes that are involved in the conjugal transfer of DNA between bacterial cells. The protein is Protein TraJ (traJ) of Escherichia coli.